We begin with the raw amino-acid sequence, 407 residues long: MDSKRKNQELSTSETADPSLSKTNKKQKIDMQEAMKNQNEVSLLLVGKVISAVAKNSNCVFSPASINAVLTVTAANTDNKTLRSFILSFLKSSSTEETNAIFHELASVVFKDGSETGGPKIAAVNGVWMEQSLSCNPDWEDLFLNFFKASFAKVDFRHKAEEVRLDVNTWASRHTNDLIKEILPRGSVTSLTNWIYGNALYFKGAWEKAFDKSMTRDKPFHLLNGKSVSVPFMRSYEKQFIEAYDGFKVLRLPYRQGRDDTNREFSMYLYLPDKKGELDNLLERITSNPGFLDSHIPEYRVDVGDFRIPKFKIEFGFEASSVFNDFELNVSLHQKALIEIDEEGTEAAAATTVVVVTGSCLWEPKKKIDFVADHPFLFLIREDKTGTLLFAGQIFDPSELSSALDRA.

A disordered region spans residues 1–28 (MDSKRKNQELSTSETADPSLSKTNKKQK). Polar residues predominate over residues 9-22 (ELSTSETADPSLSK). Positions 344 to 368 (GTEAAAATTVVVVTGSCLWEPKKKI) are RCL.

This sequence belongs to the serpin family.

Functionally, probable serine protease inhibitor. This is Serpin-Z2 from Arabidopsis thaliana (Mouse-ear cress).